We begin with the raw amino-acid sequence, 552 residues long: Urocanate hydratase (552 aa).

Residues 49–50 (GG), Q127, 173–175 (GMG), D193, 239–240 (NA), 260–264 (QTSAH), 270–271 (YI), and Y319 each bind NAD(+). Residue C407 is part of the active site. G489 is a binding site for NAD(+).

The protein belongs to the urocanase family. It depends on NAD(+) as a cofactor.

The protein localises to the cytoplasm. The enzyme catalyses 4-imidazolone-5-propanoate = trans-urocanate + H2O. It participates in amino-acid degradation; L-histidine degradation into L-glutamate; N-formimidoyl-L-glutamate from L-histidine: step 2/3. In terms of biological role, catalyzes the conversion of urocanate to 4-imidazolone-5-propionate. This Bacillus cereus (strain ATCC 14579 / DSM 31 / CCUG 7414 / JCM 2152 / NBRC 15305 / NCIMB 9373 / NCTC 2599 / NRRL B-3711) protein is Urocanate hydratase.